A 426-amino-acid polypeptide reads, in one-letter code: Zinc finger CCCH domain-containing protein 15 (426 aa).

The span at 1–12 (MPPKKQAQAGGS) shows a compositional bias: low complexity. 2 disordered regions span residues 1–30 (MPPKKQAQAGGSKKAEQKKKEKIIEDKTFG) and 53–74 (GQQNPRQVAQSEAEKKLKKDDK). The span at 13–29 (KKAEQKKKEKIIEDKTF) shows a compositional bias: basic and acidic residues. A compositionally biased stretch (polar residues) spans 53-62 (GQQNPRQVAQ). The stretch at 61–86 (AQSEAEKKLKKDDKKKELQELNELFK) forms a coiled coil. Residues 64–74 (EAEKKLKKDDK) show a composition bias toward basic and acidic residues. 2 C3H1-type zinc fingers span residues 99-126 (DPKSVVCAFFKQGQCTKGDKCKFSHDLT) and 174-212 (PKTQIVCKHFLEAIENNKYGWFWVCPGGGDICMYRHALP). Positions 218–285 (KKDKKKEEKE…RRKADFKAGK (68 aa)) form a coiled coil. At Ser231 the chain carries Phosphoserine. Residues 236 to 260 (IERERSALGPNVTKITLESFLAWKK) are required for interaction with DRG1. The disordered stretch occupies residues 299–326 (PELVNDDDEEADDTRYTQGTGGDEVDDS). Phosphoserine occurs at positions 351, 360, and 381. Positions 358-411 (YTSDKDENKLSEASGGRAENGERSDLEEDNEREGTENGAIDAVPVDENLFTGED) are disordered.

Belongs to the ZC3H15/TMA46 family. In terms of assembly, interacts with DRG1; this interaction prevents DRG1 poly-ubiquitination and degradation by proteasome. DRG1-ZC3H15/DFRP1 complex co-sediments with polysomes. Associates with microtubules.

Its subcellular location is the cytoplasm. The protein resides in the nucleus. Protects DRG1 from proteolytic degradation. Stimulates DRG1 GTPase activity likely by increasing the affinity for the potassium ions. This is Zinc finger CCCH domain-containing protein 15 (ZC3H15) from Homo sapiens (Human).